The sequence spans 1013 residues: MSVFDLPRLHFAGTATTRLPTGPRNGLVDLSTHSVVMDGERFPASRPAAEYHAYLDRVGGKGTAFAGNGYFAIDAGITAVERAAGEVDTGDLLVGRAVDVWGHYNEYLATTFNRARIFDVDPSSSWTSTVMIGQFGFGRLGRSHDVGYVFTGGVHGMQPPRWHEDGRVLHQFTVPAGEDMTWFGSAADSPAAARLRELVESGEADGLVVQLALSDAGPAPMPHAQQWRLRGTIAPWHAGEPRTCPAGRLLTPHNLTADLRGDHVSLNLISFRPPTGISGLELRTADTDRFIARVPADDPHGVVTVPAAEGGDEALCVVGTTAAGERIVVSREREVTVHVDDASVFLEHPRGPGDSDQDAEIAVRTYVRGEPAAATIHIGQYFNPRAFPLDEHATAASATPEDLDVVALCVDGTRWSRHCVISTDENGDGRFLLRGARPGATRLLLSAEGATPFDGLTAAAAYDNDDSLGLWSGLASVAVRVLPDHWWMDDIPRDKVTFDLLYREVFAFYELLYSFMGEEVFSLADRFRVETHPRLIWQMCDPRNRAKTYYMPPTRDLTGPQARLLLAYLRAQNSDVVVPVIEPSHTRSGTPISTRTDLVRALRHGVAIELAVMLQYLYAAFSIPTHGAGQELVSRGDWTPEQLRLMCGDGGETTDGGVRGSLLGVAREEMIHFLVVNNVLMAVGEPFHVPDLDFGTINDTLMVPLDFSLEALGLGSVQRFIQIEQPEGLTGAVRLGDLPVPVREAEDFHYASLSELYGDIREGLQRVPGLFLVERGRGGGEHHLFLRESVNAVHPDYQLEVDDLSSALFAIDFVTEQGEGHVLTDEDTGEESHYDTFVRVADLLMKERLTAADTRRAQWSPAYPVARNPTVHGGGQSKELVTSPVARELMVLFNKSYFMMLQLMVQHFGGSPDASLRRSKLMNAAIDVMTGVMRPLAELLVTVPSGRHGRTAGPSFELDEKPAFIPRADVARRAISLRFRHLAESARTCALVPDKVVRNLDFLADQFATEGPR.

Belongs to the RebD family. Homodimer. The cofactor is heme.

The enzyme catalyses 2 3-(7-chloroindol-3-yl)-2-iminopropanoate + H2O2 = dichlorochromopyrrolate + NH4(+) + 2 H2O + H(+). It catalyses the reaction 2 2-iminio-3-(indol-3-yl)propanoate + H2O2 = chromopyrrolate + NH4(+) + 2 H2O + H(+). It carries out the reaction 2 H2O2 = O2 + 2 H2O. Functionally, involved in the biosynthesis of the indolocarbazole antitumor agent rebeccamycin. Catalyzes the hydrogen peroxide-dependent dimerization of two L-tryptophan-derived molecules (imine form of indole 3-pyruvate (IPA)), to form dichlorochromopyrrolic acid (CPA), the precursor for the six-ring bisindolopyrrolocarbazole scaffold of the rebeccamycin. The hydrogen peroxide is provided together with iminoindolpropanoate by RebO. Due to the instability of indole 3-pyruvate (IPA), which is hydrolyzed in solution and exits in equilibrium with the predominant ketone form of IPA, the concerted functioning of the RebO/RebD system appears to prevent the buildup of significant amounts of IPA and its imine in solution, effectively shepherding the imine further down the biosynthetic chain. The chain is Dichlorochromopyrrolate synthase (rebD) from Lentzea aerocolonigenes (Lechevalieria aerocolonigenes).